Reading from the N-terminus, the 21-residue chain is Bibrotoxin (21 aa).

2 disulfides stabilise this stretch: Cys1-Cys15 and Cys3-Cys11.

This sequence belongs to the endothelin/sarafotoxin family. As to expression, expressed by the venom gland.

The protein localises to the secreted. In terms of biological role, vasoconstrictor activity. These toxins cause cardiac arrest probably as a result of coronary vasospasm. May act by displaying agonistic activities towards endothelin-1 and -2 receptors (EDNRA and EDNRB). The sequence is that of Bibrotoxin from Atractaspis bibronii (Bibron's mole viper).